A 518-amino-acid chain; its full sequence is MGVTKAEAVAGDGGKVVDDIEALADLRKEPAWKRFLSHIGPGFMVCLAYLDPGNMETDLQAGANHKYELLWVILIGLIFALIIQSLSANLGVVTGRHLAELCKTEYPVWVKTCLWLLAELAVIASDIPEVIGTGFAFNLLFHIPVWTGVLIAGSSTLLLLGLQRYGVRKLEVVVALLVFVMAGCFFVEMSIVKPPVNEVLQGLFIPRLSGPGATGDSIALLGALVMPHNLFLHSALVLSRNTPASAKGMKDVCRFFLFESGIALFVALLVNIAIISVSGTVCNATNLSPEDAVKCSDLTLDSSSFLLRNVLGKSSATVYGVALLASGQSSTITGTYAGQYVMQGFLDIKMKQWLRNLMTRSIAIVPSLIVSIIGGSSGAGRLIVIASMILSFELPFALIPLLKFSSSSNKMGENKNSIYIVGFSWVLGFVIIGINIYFLSTKLVGWILHNALPTFANVLIGIVLFPLMLLYVVAVIYLTFRKDTVKFVSRRELQAGDDTEKAQVATCVADEHSKEPPV.

Transmembrane regions (helical) follow at residues Phe35–Met55, Glu68–Ala88, Pro107–Ile127, Ile131–Ile151, Val172–Val192, Ile218–Leu238, Phe255–Ile275, Ser315–Ala337, Leu357–Ser377, Leu382–Leu402, Ile418–Phe438, and Val458–Leu478.

It belongs to the NRAMP (TC 2.A.55) family.

The protein localises to the membrane. Probable metal transporter that may participate in the control of iron homeostasis. The chain is Metal transporter Nramp1 (NRAMP1) from Oryza sativa subsp. japonica (Rice).